A 159-amino-acid polypeptide reads, in one-letter code: SsrA-binding protein (159 aa).

The protein belongs to the SmpB family.

Its subcellular location is the cytoplasm. Required for rescue of stalled ribosomes mediated by trans-translation. Binds to transfer-messenger RNA (tmRNA), required for stable association of tmRNA with ribosomes. tmRNA and SmpB together mimic tRNA shape, replacing the anticodon stem-loop with SmpB. tmRNA is encoded by the ssrA gene; the 2 termini fold to resemble tRNA(Ala) and it encodes a 'tag peptide', a short internal open reading frame. During trans-translation Ala-aminoacylated tmRNA acts like a tRNA, entering the A-site of stalled ribosomes, displacing the stalled mRNA. The ribosome then switches to translate the ORF on the tmRNA; the nascent peptide is terminated with the 'tag peptide' encoded by the tmRNA and targeted for degradation. The ribosome is freed to recommence translation, which seems to be the essential function of trans-translation. This Acidothermus cellulolyticus (strain ATCC 43068 / DSM 8971 / 11B) protein is SsrA-binding protein.